Reading from the N-terminus, the 898-residue chain is Coiled-coil domain-containing protein 186 (898 aa).

Disordered stretches follow at residues 1–43, 68–95, and 702–749; these read MSET…NESK, NYIP…QIAN, and RRKL…SSVA. At S2 the chain carries N-acetylserine. Residues 82-95 are compositionally biased toward polar residues; it reads KTDTGSENSEQIAN. A coiled-coil region spans residues 201–712; sequence KYLQQEHIIK…RKLDQVESGS (512 aa). Positions 703–717 are enriched in basic and acidic residues; the sequence is RKLDQVESGSYDKEV. Residues 718-734 show a composition bias toward low complexity; it reads SSMGSRSSSSGSLNARS. At S740 the chain carries Phosphoserine. 2 coiled-coil regions span residues 759–803 and 855–894; these read AMLI…IQSY and KLQA…LEQR.

The sequence is that of Coiled-coil domain-containing protein 186 (CCDC186) from Homo sapiens (Human).